We begin with the raw amino-acid sequence, 225 residues long: MLLHIPDILSADQVADFRRRLDAADWTDGRETVGHLGAQAKHNQQLPEGSPLRRELGEIILVALARHPLFFSAALPLKYLPPRFNRYSGGGTYGFHVDGAVMNLANGEQLRSDISCTLFLSAPYEYEGGELIISDTYGEHEVKLPAGDLIVYPSSSLHQVRPVTAGARVASFFWVQSMVRDDVQRRLLWEMDGSIERLRQTGGDAEAVLQLTGVYHNLLRRWSEV.

One can recognise a Fe2OG dioxygenase domain in the interval 78-177 (KYLPPRFNRY…RVASFFWVQS (100 aa)). Fe cation contacts are provided by His96, Asp98, and His158. Position 168 (Arg168) interacts with 2-oxoglutarate.

It depends on Fe(2+) as a cofactor. The cofactor is L-ascorbate.

This Stenotrophomonas maltophilia (strain K279a) protein is PKHD-type hydroxylase Smlt1146.